The primary structure comprises 334 residues: 7,8-didemethyl-8-hydroxy-5-deazariboflavin synthase (334 aa).

One can recognise a Radical SAM core domain in the interval 2-248 (VSYSKNVFVP…PDVPVQVPPN (247 aa)). Cys16, Cys20, and Cys23 together coordinate [4Fe-4S] cluster.

This sequence belongs to the radical SAM superfamily. CofG family. As to quaternary structure, consists of two subunits, CofG and CofH. Requires [4Fe-4S] cluster as cofactor.

The catalysed reaction is 5-amino-5-(4-hydroxybenzyl)-6-(D-ribitylimino)-5,6-dihydrouracil + S-adenosyl-L-methionine = 7,8-didemethyl-8-hydroxy-5-deazariboflavin + 5'-deoxyadenosine + L-methionine + NH4(+) + H(+). It participates in cofactor biosynthesis; coenzyme F0 biosynthesis. In terms of biological role, catalyzes the radical-mediated synthesis of 7,8-didemethyl-8-hydroxy-5-deazariboflavin from 5-amino-5-(4-hydroxybenzyl)-6-(D-ribitylimino)-5,6-dihydrouracil. This chain is 7,8-didemethyl-8-hydroxy-5-deazariboflavin synthase, found in Methanopyrus kandleri (strain AV19 / DSM 6324 / JCM 9639 / NBRC 100938).